The chain runs to 221 residues: 2-C-methyl-D-erythritol 4-phosphate cytidylyltransferase (221 aa).

It belongs to the IspD/TarI cytidylyltransferase family. IspD subfamily.

The enzyme catalyses 2-C-methyl-D-erythritol 4-phosphate + CTP + H(+) = 4-CDP-2-C-methyl-D-erythritol + diphosphate. Its pathway is isoprenoid biosynthesis; isopentenyl diphosphate biosynthesis via DXP pathway; isopentenyl diphosphate from 1-deoxy-D-xylulose 5-phosphate: step 2/6. In terms of biological role, catalyzes the formation of 4-diphosphocytidyl-2-C-methyl-D-erythritol from CTP and 2-C-methyl-D-erythritol 4-phosphate (MEP). The protein is 2-C-methyl-D-erythritol 4-phosphate cytidylyltransferase of Roseobacter denitrificans (strain ATCC 33942 / OCh 114) (Erythrobacter sp. (strain OCh 114)).